A 393-amino-acid polypeptide reads, in one-letter code: Tryptophan synthase beta chain (393 aa).

The residue at position 85 (lysine 85) is an N6-(pyridoxal phosphate)lysine.

This sequence belongs to the TrpB family. As to quaternary structure, tetramer of two alpha and two beta chains. Pyridoxal 5'-phosphate is required as a cofactor.

It carries out the reaction (1S,2R)-1-C-(indol-3-yl)glycerol 3-phosphate + L-serine = D-glyceraldehyde 3-phosphate + L-tryptophan + H2O. Its pathway is amino-acid biosynthesis; L-tryptophan biosynthesis; L-tryptophan from chorismate: step 5/5. Its function is as follows. The beta subunit is responsible for the synthesis of L-tryptophan from indole and L-serine. In Helicobacter pylori (strain ATCC 700392 / 26695) (Campylobacter pylori), this protein is Tryptophan synthase beta chain (trpB).